Reading from the N-terminus, the 176-residue chain is Ribosome maturation factor RimM (176 aa).

In terms of domain architecture, PRC barrel spans 96-176 (PADEFYWRDL…QILVDWDPDF (81 aa)).

Belongs to the RimM family. In terms of assembly, binds ribosomal protein uS19.

Its subcellular location is the cytoplasm. Functionally, an accessory protein needed during the final step in the assembly of 30S ribosomal subunit, possibly for assembly of the head region. Essential for efficient processing of 16S rRNA. May be needed both before and after RbfA during the maturation of 16S rRNA. It has affinity for free ribosomal 30S subunits but not for 70S ribosomes. This is Ribosome maturation factor RimM from Shewanella baltica (strain OS223).